The following is a 297-amino-acid chain: Ribonuclease HIII (297 aa).

The region spanning 81–297 (IPIIGTDEVG…NTKKAQALLK (217 aa)) is the RNase H type-2 domain. A divalent metal cation contacts are provided by D87, E88, and D192.

It belongs to the RNase HII family. RnhC subfamily. Mn(2+) serves as cofactor. Requires Mg(2+) as cofactor.

The protein localises to the cytoplasm. It catalyses the reaction Endonucleolytic cleavage to 5'-phosphomonoester.. In terms of biological role, endonuclease that specifically degrades the RNA of RNA-DNA hybrids. The polypeptide is Ribonuclease HIII (Streptococcus agalactiae serotype III (strain NEM316)).